The sequence spans 82 residues: Progonadoliberin-3 (82 aa).

The N-terminal stretch at 1–23 is a signal peptide; it reads MDLSSKTVVQVVMLALIAQVTFS. The residue at position 24 (Gln-24) is a Pyrrolidone carboxylic acid. Gly-33 is subject to Glycine amide.

Belongs to the GnRH family.

The protein localises to the secreted. Its function is as follows. Stimulates the secretion of gonadotropins. In Oncorhynchus masou (Cherry salmon), this protein is Progonadoliberin-3 (gnrh3).